The primary structure comprises 114 residues: UPF0342 protein PEPE_0673 (114 aa).

It belongs to the UPF0342 family.

The chain is UPF0342 protein PEPE_0673 from Pediococcus pentosaceus (strain ATCC 25745 / CCUG 21536 / LMG 10740 / 183-1w).